The primary structure comprises 402 residues: MAVVATLRLSAQGTVTFEDVAVKFTQEEWNLLSEAQRCLYRDVTLENLALMSSLGCWCGVEDEAAPSKQSIYIQRETQVRTPVTGVSPKKAHPCEMCGPILGDILHVADHQGTHHKQKLHRCEAWGNKLYDSGNFHQHQNEHIGEKPYRGSVEEALFVKRCKLHVSGESSVFSESGKDFLPRSGLLQQEASHTGEKSNSKTECVSPFQCGGAHYSHGDSMKHFSTKHILSQHQRLLPREECYVCCECGKSFSKYVSFSNHQRVHSGKRPYECGECEKSFSQKSSLIQHQQFHTGGKPYGCEECGKYFSLEGYLRRHQKVHAGKGPYECGECGKSFSSNVNLKSHQRIHTGERPYKCGECEKSFSRKPSLSYHQRFGRPRWVDHKDRKEFKTSLGNIVKSCLF.

The KRAB domain occupies 15-91 (VTFEDVAVKF…PVTGVSPKKA (77 aa)). The C2H2-type 1 zinc-finger motif lies at 92–114 (HPCEMCGPILGDILHVADHQGTH). The C2H2-type 2; degenerate zinc-finger motif lies at 120–142 (HRCEAWGNKLYDSGNFHQHQNEH). Glycyl lysine isopeptide (Lys-Gly) (interchain with G-Cter in SUMO2) cross-links involve residues Lys177, Lys200, and Lys253. 5 C2H2-type zinc fingers span residues 242-264 (YVCC…QRVH), 270-292 (YECG…QQFH), 298-320 (YGCE…QKVH), 326-348 (YECG…QRIH), and 354-383 (YKCG…WVDH). Lys366 participates in a covalent cross-link: Glycyl lysine isopeptide (Lys-Gly) (interchain with G-Cter in SUMO2).

Belongs to the krueppel C2H2-type zinc-finger protein family.

It is found in the nucleus. May be involved in transcriptional regulation. The sequence is that of Zinc finger protein 587B (ZNF587B) from Homo sapiens (Human).